The primary structure comprises 324 residues: Appendage-associated protein (324 aa).

An N-terminal signal peptide occupies residues 1–32; the sequence is MGCPVSRGGSPGCGRRIAEELRLAEDARLRLA. Positions 195 to 255 form a coiled coil; the sequence is IAQAKEIAQA…AADKLQALGK (61 aa).

It is found in the secreted. Functionally, associates with actin filament appendages that are formed in the inclusion appendages of the parasitophorous vacuole during infection of the host erythrocyte. The polypeptide is Appendage-associated protein (aaaP1) (Anaplasma marginale (strain Florida)).